The following is a 368-amino-acid chain: Germination protease (368 aa).

The propeptide occupies 1-16; that stretch reads MEKKKLDLSQYAVRTD.

Belongs to the peptidase A25 family. As to quaternary structure, homotetramer. Autoproteolytically processed. The inactive tetrameric zymogen termed p46 autoprocesses to a smaller form termed p41, which is active only during spore germination.

The enzyme catalyses Endopeptidase action with P4 Glu or Asp, P1 preferably Glu &gt; Asp, P1' hydrophobic and P2' Ala.. In terms of biological role, initiates the rapid degradation of small, acid-soluble proteins during spore germination. This Bacillus licheniformis (strain ATCC 14580 / DSM 13 / JCM 2505 / CCUG 7422 / NBRC 12200 / NCIMB 9375 / NCTC 10341 / NRRL NRS-1264 / Gibson 46) protein is Germination protease.